A 117-amino-acid chain; its full sequence is Large ribosomal subunit protein bL20c (117 aa).

Belongs to the bacterial ribosomal protein bL20 family.

The protein localises to the plastid. The protein resides in the chloroplast. Binds directly to 23S ribosomal RNA and is necessary for the in vitro assembly process of the 50S ribosomal subunit. It is not involved in the protein synthesizing functions of that subunit. This is Large ribosomal subunit protein bL20c from Buxus microphylla (Littleleaf boxwood).